A 389-amino-acid chain; its full sequence is 5-hydroxytryptamine receptor 1B (389 aa).

The interval 1–27 is disordered; it reads MEETNTHCAPPPPAGSQTGVSQANLSS. The Extracellular portion of the chain corresponds to 1–45; it reads MEETNTHCAPPPPAGSQTGVSQANLSSAPPNCSTEGYIYQDSIAL. Residues 15 to 27 show a composition bias toward polar residues; sequence GSQTGVSQANLSS. N-linked (GlcNAc...) asparagine glycosylation is found at N24 and N31. A helical membrane pass occupies residues 46–71; it reads PWKVLLILVLALFTLATTLSNAFVIA. The Cytoplasmic portion of the chain corresponds to 72-85; it reads TVYRTRKLHTPANY. A helical transmembrane segment spans residues 86-110; the sequence is LIASLAVTDLLVSILVMPISTMYTV. Residues 111–118 are Extracellular-facing; it reads TGRWTLGQ. Residues 119 to 144 traverse the membrane as a helical segment; sequence VVCDFWLSSDITCCTASILHLCVIAL. Cysteines 121 and 198 form a disulfide. Residues D128 and T133 each contribute to the ergotamine site. The DRY motif; important for ligand-induced conformation changes and signaling motif lies at 145–147; sequence DRY. At 145–164 the chain is on the cytoplasmic side; it reads DRYWAITDAVEYSAKRTPKR. Residues 165-183 traverse the membrane as a helical segment; that stretch reads AAVMIALVWVFSISISLPP. Over 184-204 the chain is Extracellular; that stretch reads FFWRQAKAEEEVSDCRVNTDH. Ergotamine is bound at residue V200. Residues 205–228 form a helical membrane-spanning segment; that stretch reads MLYTVYSTVGAFYFPTLLLIALYG. Residues 229-314 are Cytoplasmic-facing; it reads RIYVEARSRI…AARERKATKT (86 aa). A compositionally biased stretch (polar residues) spans 258–271; it reads DSPGSTSSVTSVNS. Residues 258-281 are disordered; that stretch reads DSPGSTSSVTSVNSRAPDVPSESG. A helical membrane pass occupies residues 315–336; the sequence is LGIILGAFIVCWLPFFIISLVM. Residues 337 to 346 are Extracellular-facing; the sequence is PICKDACWFH. Residues 347 to 369 form a helical membrane-spanning segment; that stretch reads LAIFDFFTWLGYLNSLINPIIYT. Residues 364–368 carry the NPxxY motif; important for ligand-induced conformation changes and signaling motif; sequence NPIIY. The Cytoplasmic segment spans residues 370–389; the sequence is MSNEDFKQAFHKLIRFKCTG. A lipid anchor (S-palmitoyl cysteine) is attached at C387.

It belongs to the G-protein coupled receptor 1 family. As to quaternary structure, homodimer. Heterodimer with HTR1D. Phosphorylated. Desensitization of the receptor may be mediated by its phosphorylation. Post-translationally, palmitoylated.

The protein localises to the cell membrane. G-protein coupled receptor for 5-hydroxytryptamine (serotonin). Also functions as a receptor for ergot alkaloid derivatives, various anxiolytic and antidepressant drugs and other psychoactive substances, such as lysergic acid diethylamide (LSD). Ligand binding causes a conformation change that triggers signaling via guanine nucleotide-binding proteins (G proteins) and modulates the activity of downstream effectors, such as adenylate cyclase. HTR1B is coupled to G(i)/G(o) G alpha proteins and mediates inhibitory neurotransmission by inhibiting adenylate cyclase activity. Arrestin family members inhibit signaling via G proteins and mediate activation of alternative signaling pathways. Regulates the release of 5-hydroxytryptamine, dopamine and acetylcholine in the brain, and thereby affects neural activity, nociceptive processing, pain perception, mood and behavior. Besides, plays a role in vasoconstriction of cerebral arteries. The sequence is that of 5-hydroxytryptamine receptor 1B (HTR1B) from Felis catus (Cat).